Reading from the N-terminus, the 177-residue chain is Large ribosomal subunit protein uL6 (177 aa).

The protein belongs to the universal ribosomal protein uL6 family. As to quaternary structure, part of the 50S ribosomal subunit.

In terms of biological role, this protein binds to the 23S rRNA, and is important in its secondary structure. It is located near the subunit interface in the base of the L7/L12 stalk, and near the tRNA binding site of the peptidyltransferase center. This is Large ribosomal subunit protein uL6 from Delftia acidovorans (strain DSM 14801 / SPH-1).